The sequence spans 333 residues: Complement C1q and tumor necrosis factor-related protein 9 (333 aa).

A signal peptide spans 1-19 (MRIWWLLLVMGACTRSVFS). The disordered stretch occupies residues 22–194 (TCRQGHSGIP…GDRGEKGKVG (173 aa)). Collagen-like domains lie at 24-82 (RQGH…DGRV), 84-130 (AKGI…KGEV), and 134-193 (GPEG…KGKV). 4-hydroxyproline occurs at positions 31, 34, and 40. Positions 42 to 57 (RDGRDGAKGDKGDAGE) are enriched in basic and acidic residues. 4-hydroxyproline occurs at positions 58, 61, and 64. Residues 67 to 88 (DGIRGEKGEPGADGRVEAKGIK) are compositionally biased toward basic and acidic residues. At Lys73 the chain carries 5-hydroxylysine. O-linked (Gal...) hydroxylysine glycosylation occurs at Lys73. Residues Pro76 and Pro115 each carry the 4-hydroxyproline modification. Residue Lys127 is modified to 5-hydroxylysine. Lys127 carries O-linked (Gal...) hydroxylysine glycosylation. 4-hydroxyproline is present on residues Pro151, Pro160, and Pro175. Positions 183–193 (WKGDRGEKGKV) are enriched in basic and acidic residues. A C1q domain is found at 197 to 333 (PLVPKSAFTV…FTGFLLFSSS (137 aa)).

Multimers (predominantly trimers). Interacts with ADIPOQ via the C1q domain to form a heterotrimeric complex. In terms of processing, the isomeric forms of the hydroxylated amino acids could not be determined in the mass-spectrometric methods reported in PubMed:18787108 but are assumed on the basis of their occurrence in collagen-like domains. As to expression, expressed predominantly in adipose tissue. Females express higher levels than males.

Its subcellular location is the secreted. In terms of biological role, probable adipokine. Activates AMPK, AKT, and p44/42 MAPK signaling pathways. The protein is Complement C1q and tumor necrosis factor-related protein 9 (C1qtnf9) of Mus musculus (Mouse).